Here is a 370-residue protein sequence, read N- to C-terminus: 4-hydroxy-3-methylbut-2-en-1-yl diphosphate synthase (flavodoxin) (370 aa).

Residues C270, C273, C305, and E312 each coordinate [4Fe-4S] cluster.

The protein belongs to the IspG family. [4Fe-4S] cluster is required as a cofactor.

The catalysed reaction is (2E)-4-hydroxy-3-methylbut-2-enyl diphosphate + oxidized [flavodoxin] + H2O + 2 H(+) = 2-C-methyl-D-erythritol 2,4-cyclic diphosphate + reduced [flavodoxin]. Its pathway is isoprenoid biosynthesis; isopentenyl diphosphate biosynthesis via DXP pathway; isopentenyl diphosphate from 1-deoxy-D-xylulose 5-phosphate: step 5/6. Functionally, converts 2C-methyl-D-erythritol 2,4-cyclodiphosphate (ME-2,4cPP) into 1-hydroxy-2-methyl-2-(E)-butenyl 4-diphosphate. This Hamiltonella defensa subsp. Acyrthosiphon pisum (strain 5AT) protein is 4-hydroxy-3-methylbut-2-en-1-yl diphosphate synthase (flavodoxin).